Reading from the N-terminus, the 179-residue chain is Segregation and condensation protein B (179 aa).

It belongs to the ScpB family. As to quaternary structure, homodimer. Homodimerization may be required to stabilize the binding of ScpA to the Smc head domains. Component of a cohesin-like complex composed of ScpA, ScpB and the Smc homodimer, in which ScpA and ScpB bind to the head domain of Smc. The presence of the three proteins is required for the association of the complex with DNA.

The protein localises to the cytoplasm. Its function is as follows. Participates in chromosomal partition during cell division. May act via the formation of a condensin-like complex containing Smc and ScpA that pull DNA away from mid-cell into both cell halves. This is Segregation and condensation protein B from Clostridioides difficile (strain 630) (Peptoclostridium difficile).